A 277-amino-acid polypeptide reads, in one-letter code: 4-hydroxy-3-prenylphenylpyruvate oxygenase/4-hydroxy-3-prenylbenzoate synthase (277 aa).

It belongs to the aldolase class II family. Homotetramer. Requires Fe(2+) as cofactor.

It catalyses the reaction 3-dimethylallyl-4-hydroxyphenylpyruvate + O2 = 3-dimethylallyl-4-hydroxymandelate + CO2. It carries out the reaction 3-dimethylallyl-4-hydroxymandelate + O2 = 3-dimethylallyl-4-hydroxybenzoate + CO2 + H2O. It functions in the pathway antibiotic biosynthesis. Its activity is regulated as follows. Activated by ascorbate. Its function is as follows. Involved in the biosynthesis of ring A of the aminocoumarin antibiotic clorobiocin. Catalyzes two consecutive oxidative decarboxylations of 3-dimethylallyl-4-hydroxyphenylpyruvate (3DMA-4HPP) to yield 3-dimethylallyl-4-hydroxybenzoate (3DMA-4HB) via the 3-dimethylallyl-4-hydroxymandelic acid (3DMA-4HMA) intermediate. This is 4-hydroxy-3-prenylphenylpyruvate oxygenase/4-hydroxy-3-prenylbenzoate synthase from Streptomyces roseochromogenus subsp. oscitans.